Consider the following 413-residue polypeptide: MNIYAVGGAIRDELLGVPVQDRDYVVVGATPEQMTAQGFRPVGKDFPVFLHPQTQEEYALARTERKTAAGYHGFQFHYAPDVTLDEDLARRDLTINAMAREVSPEGTLVGPVIDPFDGQADLRARVFRHVSDAFVEDPVRILRIARFAARFADFTVADETLALMRRMVDAGEVDALVPERVWQEIARGLMEAKPSRMFAVLRDCGALARILPEVDALWGVPQRADYHPEVDTGVHVMMVVDYAAKQGYSLAVRFAALTHDLGKGTTPADVLPRHVGHESRSVELLKPLCERLRVPNECRDLALVVAREHGNLHRVMEMGAAALVRLFERSDALRKPARFAELLQACESDARGRLGLDAQPYPQAERLRVALAAARSVDAGAIARGIGSDTEKIKEAVHRARIQAVAQALAIGE.

Residues G8 and R11 each coordinate ATP. G8 and R11 together coordinate CTP. Positions 21 and 23 each coordinate Mg(2+). ATP is bound by residues R91, R143, and R146. 3 residues coordinate CTP: R91, R143, and R146. Residues 232–333 (TGVHVMMVVD…VRLFERSDAL (102 aa)) enclose the HD domain.

This sequence belongs to the tRNA nucleotidyltransferase/poly(A) polymerase family. Bacterial CCA-adding enzyme type 1 subfamily. As to quaternary structure, monomer. Can also form homodimers and oligomers. The cofactor is Mg(2+). Ni(2+) serves as cofactor.

The catalysed reaction is a tRNA precursor + 2 CTP + ATP = a tRNA with a 3' CCA end + 3 diphosphate. The enzyme catalyses a tRNA with a 3' CCA end + 2 CTP + ATP = a tRNA with a 3' CCACCA end + 3 diphosphate. Functionally, catalyzes the addition and repair of the essential 3'-terminal CCA sequence in tRNAs without using a nucleic acid template. Adds these three nucleotides in the order of C, C, and A to the tRNA nucleotide-73, using CTP and ATP as substrates and producing inorganic pyrophosphate. tRNA 3'-terminal CCA addition is required both for tRNA processing and repair. Also involved in tRNA surveillance by mediating tandem CCA addition to generate a CCACCA at the 3' terminus of unstable tRNAs. While stable tRNAs receive only 3'-terminal CCA, unstable tRNAs are marked with CCACCA and rapidly degraded. This Burkholderia cenocepacia (strain ATCC BAA-245 / DSM 16553 / LMG 16656 / NCTC 13227 / J2315 / CF5610) (Burkholderia cepacia (strain J2315)) protein is Multifunctional CCA protein.